Reading from the N-terminus, the 57-residue chain is Cytochrome b-c1 complex subunit 10, mitochondrial (57 aa).

At 1-23 the chain is on the mitochondrial matrix side; that stretch reads MAGTSGLLNAVKPKIQTIDIQAA. The helical transmembrane segment at 24–44 threads the bilayer; sequence AGWGIAAAAGAIWVVQPFGWI. The Mitochondrial intermembrane portion of the chain corresponds to 45-57; sequence KKTFIDPPPTEEK.

It belongs to the UQCR11/QCR10 family. In terms of assembly, component of the ubiquinol-cytochrome c oxidoreductase (cytochrome b-c1 complex, complex III, CIII), a multisubunit enzyme composed of 10 subunits. The complex is composed of 3 respiratory subunits cytochrome b (MT-CYB), cytochrome c1 (CYC1-1 or CYC1-2) and Rieske protein (UCR1-1 or UCR1-2), 2 core protein subunits MPPalpha1 (or MPPalpha2) and MPPB, and 5 low-molecular weight protein subunits QCR7-1 (or QCR7-2), UCRQ-1 (or UCRQ-2), QCR9, UCRY and probably QCR6-1 (or QCR6-2). The complex exists as an obligatory dimer and forms supercomplexes (SCs) in the inner mitochondrial membrane with NADH-ubiquinone oxidoreductase (complex I, CI), resulting in different assemblies (supercomplexes SCI(1)III(2) and SCI(2)III(4)).

It is found in the mitochondrion inner membrane. Component of the ubiquinol-cytochrome c oxidoreductase, a multisubunit transmembrane complex that is part of the mitochondrial electron transport chain which drives oxidative phosphorylation. The respiratory chain contains 3 multisubunit complexes succinate dehydrogenase (complex II, CII), ubiquinol-cytochrome c oxidoreductase (cytochrome b-c1 complex, complex III, CIII) and cytochrome c oxidase (complex IV, CIV), that cooperate to transfer electrons derived from NADH and succinate to molecular oxygen, creating an electrochemical gradient over the inner membrane that drives transmembrane transport and the ATP synthase. The cytochrome b-c1 complex catalyzes electron transfer from ubiquinol to cytochrome c, linking this redox reaction to translocation of protons across the mitochondrial inner membrane, with protons being carried across the membrane as hydrogens on the quinol. In the process called Q cycle, 2 protons are consumed from the matrix, 4 protons are released into the intermembrane space and 2 electrons are passed to cytochrome c. In Arabidopsis thaliana (Mouse-ear cress), this protein is Cytochrome b-c1 complex subunit 10, mitochondrial (UCRY).